The chain runs to 472 residues: Putative diacyglycerol O-acyltransferase MT3172 (472 aa).

His139 (proton acceptor) is an active-site residue. The disordered stretch occupies residues 217 to 238 (DRRVPPTFDRSAPPGPFQRGLS).

It belongs to the long-chain O-acyltransferase family.

It carries out the reaction an acyl-CoA + a 1,2-diacyl-sn-glycerol = a triacyl-sn-glycerol + CoA. Its pathway is glycerolipid metabolism; triacylglycerol biosynthesis. In Mycobacterium tuberculosis (strain CDC 1551 / Oshkosh), this protein is Putative diacyglycerol O-acyltransferase MT3172.